We begin with the raw amino-acid sequence, 433 residues long: Signal recognition particle 54 kDa protein (433 aa).

Residues 106-113 (GVEGSGKT), 186-190 (DTAGR), and 244-247 (TKMD) contribute to the GTP site.

It belongs to the GTP-binding SRP family. SRP54 subfamily. In terms of assembly, part of the signal recognition particle protein translocation system, which is composed of SRP and FtsY. Archaeal SRP consists of a 7S RNA molecule of 300 nucleotides and two protein subunits: SRP54 and SRP19.

It localises to the cytoplasm. The catalysed reaction is GTP + H2O = GDP + phosphate + H(+). Functionally, involved in targeting and insertion of nascent membrane proteins into the cytoplasmic membrane. Binds to the hydrophobic signal sequence of the ribosome-nascent chain (RNC) as it emerges from the ribosomes. The SRP-RNC complex is then targeted to the cytoplasmic membrane where it interacts with the SRP receptor FtsY. This chain is Signal recognition particle 54 kDa protein, found in Pyrobaculum neutrophilum (strain DSM 2338 / JCM 9278 / NBRC 100436 / V24Sta) (Thermoproteus neutrophilus).